A 583-amino-acid polypeptide reads, in one-letter code: RuBisCO large subunit-binding protein subunit alpha, chloroplastic (583 aa).

Positions 1–14 (MATANALSSPSVLC) are enriched in polar residues. Positions 1-35 (MATANALSSPSVLCSSRQGKLSGGSQQKGQRVSYR) are disordered. The N-terminal 45 residues, 1–45 (MATANALSSPSVLCSSRQGKLSGGSQQKGQRVSYRKANRRFSLRA), are a transit peptide targeting the chloroplast. Positions 15–31 (SSRQGKLSGGSQQKGQR) are enriched in low complexity. Ser-89 is modified (phosphoserine).

The protein belongs to the chaperonin (HSP60) family. Oligomer of probably six alpha and six beta subunits.

The protein localises to the plastid. It localises to the chloroplast. Functionally, this protein binds RuBisCO small and large subunits and is implicated in the assembly of the enzyme oligomer. The protein is RuBisCO large subunit-binding protein subunit alpha, chloroplastic of Brassica napus (Rape).